Here is a 154-residue protein sequence, read N- to C-terminus: MASASRDQQRDLIARGLEAEVNKRAAVSLFDRFGPSNPLFKKQYADTRLSLRSYHSCSQTERVRASLELVNLTIETKNKERALLSKLNRGAVARVEKLCDAVADLREEFDLELDSLTAAQDDPVEGGPEPADVADTITEWRAEALPSVPAEDAP.

The interval 116–137 is disordered; that stretch reads LTAAQDDPVEGGPEPADVADTI.

The protein belongs to the herpesviridae UL96 family.

This Equus caballus (Horse) protein is Gene 35 protein (35).